The following is a 467-amino-acid chain: Syntaxin-5 (467 aa).

Disordered stretches follow at residues 1-53 (MQTR…QSLV) and 58-77 (GHEA…SIST). At 1–445 (MQTRRRLHQT…KYFQSVSKNR (445 aa)) the chain is on the cytoplasmic side. Residues 10-22 (TDQQDYSSSSTYT) are compositionally biased toward low complexity. Residues 29-45 (GGAGAGSVGTGTAGGSV) show a composition bias toward gly residues. Over residues 68–77 (NYQSGDSIST) the composition is skewed to polar residues. Positions 245–269 (IKGDLNALNQQIARLQDISKDQRRH) form a coiled coil. The tract at residues 310-335 (QQKTRRDQFSQGPGPLAAHTVSPSTA) is disordered. The t-SNARE coiled-coil homology domain maps to 375–437 (DNYVQQRAET…EAAHGEILKY (63 aa)). A helical; Anchor for type IV membrane protein transmembrane segment spans residues 446–466 (WLMIKIFGVLIFFFLFFVVFM). Residue serine 467 is a topological domain, vesicular.

Belongs to the syntaxin family. In terms of assembly, homodimer.

It is found in the golgi apparatus. The protein resides in the cis-Golgi network membrane. Mediates endoplasmic reticulum to Golgi transport. The protein is Syntaxin-5 of Drosophila melanogaster (Fruit fly).